A 237-amino-acid chain; its full sequence is MSKKITILIDAGHGGYDPGAIGIRGLKEKNINIEIALKLEKLLNHDKMFCTILTRHNDSYLSLKKRKQLLKKNQVNFLISIHADSSRKQNVSGASIWIVSKTRINREINNYLKNKSTLLFSKKIENIFKQNKNDFFLKKTILDLQSNNFQKIELDLSKEILKQLEKNTKLNKKYPNYASLGILSSINTPSILIETGFITNILEGKKLKTTNYQNKIANSIYLGLKNYFTKSSYILKK.

The 219-residue stretch at 7 to 225 folds into the MurNAc-LAA domain; sequence ILIDAGHGGY…IANSIYLGLK (219 aa).

Belongs to the N-acetylmuramoyl-L-alanine amidase 3 family.

The protein localises to the secreted. The catalysed reaction is Hydrolyzes the link between N-acetylmuramoyl residues and L-amino acid residues in certain cell-wall glycopeptides.. In terms of biological role, cell-wall hydrolase involved in septum cleavage during cell division. This chain is Putative N-acetylmuramoyl-L-alanine amidase (amiB), found in Buchnera aphidicola subsp. Acyrthosiphon pisum (strain APS) (Acyrthosiphon pisum symbiotic bacterium).